The sequence spans 229 residues: Large ribosomal subunit protein uL1 (229 aa).

Belongs to the universal ribosomal protein uL1 family. In terms of assembly, part of the 50S ribosomal subunit.

In terms of biological role, binds directly to 23S rRNA. The L1 stalk is quite mobile in the ribosome, and is involved in E site tRNA release. Functionally, protein L1 is also a translational repressor protein, it controls the translation of the L11 operon by binding to its mRNA. The chain is Large ribosomal subunit protein uL1 from Haemophilus influenzae (strain PittEE).